A 258-amino-acid chain; its full sequence is Ribosomal RNA small subunit methyltransferase A (258 aa).

6 residues coordinate S-adenosyl-L-methionine: His13, Leu15, Gly40, Glu61, Asp86, and Asn106.

It belongs to the class I-like SAM-binding methyltransferase superfamily. rRNA adenine N(6)-methyltransferase family. RsmA subfamily.

The protein localises to the cytoplasm. The catalysed reaction is adenosine(1518)/adenosine(1519) in 16S rRNA + 4 S-adenosyl-L-methionine = N(6)-dimethyladenosine(1518)/N(6)-dimethyladenosine(1519) in 16S rRNA + 4 S-adenosyl-L-homocysteine + 4 H(+). Specifically dimethylates two adjacent adenosines (A1518 and A1519) in the loop of a conserved hairpin near the 3'-end of 16S rRNA in the 30S particle. May play a critical role in biogenesis of 30S subunits. The sequence is that of Ribosomal RNA small subunit methyltransferase A from Coxiella burnetii (strain RSA 331 / Henzerling II).